The chain runs to 117 residues: Appetite-regulating hormone (117 aa).

The signal sequence occupies residues 1 to 23 (MPSPGTVCSLLLLGMLWLDLAMA). A lipid anchor (O-decanoyl serine; alternate) is attached at Ser-26. Residue Ser-26 is the site of O-hexanoyl serine; alternate attachment. Ser-26 carries the O-octanoyl serine; alternate lipid modification. Positions 29-50 (SPEHQRVQQRKESKKPPAKLQP) are disordered. The segment covering 31–43 (EHQRVQQRKESKK) has biased composition (basic and acidic residues). Residues 52 to 75 (ALAGWLRPEDGGQAEGAEDELEVR) constitute a propeptide, removed in mature form. Leu-98 carries the leucine amide modification. A propeptide spans 99–117 (GKFLQDILWEEAKEAPADK) (removed in mature form).

It belongs to the motilin family. O-octanoylated by GOAT/MBOAT4. O-octanoylation or O-decanoylation is essential for ghrelin activity. The O-decanoylated forms Ghrelin-27-C10 and Ghrelin-28-C10 differ in the length of the carbon backbone of the carboxylic acid bound to Ser-26. A small fraction of ghrelin, ghrelin-28-C10:1, may be modified with a singly unsaturated carboxylic acid. Also O-acetylated and O-butyrylated on Ser-26 to minor levels. Post-translationally, amidation of Leu-98 is essential for obestatin activity. As to expression, highest level in stomach. All forms are found in serum as well. Other tissues compensate for the loss of ghrelin synthesis in the stomach following gastrectomy.

Its subcellular location is the secreted. Its function is as follows. Ghrelin is the ligand for growth hormone secretagogue receptor type 1 (GHSR). Induces the release of growth hormone from the pituitary. Has an appetite-stimulating effect, induces adiposity and stimulates gastric acid secretion. Involved in growth regulation. In terms of biological role, may be the ligand for GPR39. May have an appetite-reducing effect resulting in decreased food intake. May reduce gastric emptying activity and jejunal motility. The protein is Appetite-regulating hormone (GHRL) of Homo sapiens (Human).